A 366-amino-acid polypeptide reads, in one-letter code: Homoserine O-acetyltransferase (366 aa).

One can recognise an AB hydrolase-1 domain in the interval asparagine 47–leucine 349. Catalysis depends on serine 153, which acts as the Nucleophile. Residue arginine 221 coordinates substrate. Residues aspartate 311 and histidine 344 contribute to the active site. A substrate-binding site is contributed by aspartate 345.

It belongs to the AB hydrolase superfamily. MetX family. In terms of assembly, homodimer.

It is found in the cytoplasm. The catalysed reaction is L-homoserine + acetyl-CoA = O-acetyl-L-homoserine + CoA. The protein operates within amino-acid biosynthesis; L-methionine biosynthesis via de novo pathway; O-acetyl-L-homoserine from L-homoserine: step 1/1. In terms of biological role, transfers an acetyl group from acetyl-CoA to L-homoserine, forming acetyl-L-homoserine. This Leptospira interrogans serogroup Icterohaemorrhagiae serovar copenhageni (strain Fiocruz L1-130) protein is Homoserine O-acetyltransferase.